A 63-amino-acid polypeptide reads, in one-letter code: Large ribosomal subunit protein uL29 (63 aa).

This sequence belongs to the universal ribosomal protein uL29 family.

The polypeptide is Large ribosomal subunit protein uL29 (Aeromonas salmonicida (strain A449)).